We begin with the raw amino-acid sequence, 445 residues long: Trimethylamine monooxygenase (445 aa).

FAD-binding residues include Ser14, Glu39, Gln41, Leu47, Trp48, and His64. NADP(+)-binding residues include Trp72 and Asn74. Residues Asn74 and Val127 each contribute to the FAD site. 4 residues coordinate NADP(+): Thr204, Ser205, Ser207, and Arg228. Residues Gln317 and Thr320 each coordinate FAD. Arg411 is a binding site for NADP(+).

It belongs to the FMO family. FAD is required as a cofactor.

It catalyses the reaction trimethylamine + NADPH + O2 = trimethylamine N-oxide + NADP(+) + H2O. Catalyzes the oxidation of trimethylamine (TMA) to produce trimethylamine N-oxide (TMAO). In vitro, has a broad substrate specificity, oxidizing many nitrogen- and sulfur-containing compounds, including dimethylamine (DMA), dimethylsulfide (DMS) and dimethylsulfoxide (DMSO). The polypeptide is Trimethylamine monooxygenase (Roseovarius sp. (strain 217)).